Here is a 637-residue protein sequence, read N- to C-terminus: ATP-dependent rRNA helicase SPB4 (637 aa).

Residues 14–42 (WDTLNPPLSEWIRDAVATMGFDQMTPVQA) carry the Q motif motif. In terms of domain architecture, Helicase ATP-binding spans 45-247 (LPHFMGNKDV…RVGLRNPVKI (203 aa)). 58–65 (AVTGSGKT) contacts ATP. The DEAD box motif lies at 195 to 198 (DEAD). The 156-residue stretch at 283 to 438 (ALAELLRQLP…TITTSEDDAA (156 aa)) folds into the Helicase C-terminal domain. A coiled-coil region spans residues 524–631 (KEKTREQQRK…AAAKQEKDGE (108 aa)). Basic and acidic residues-rich tracts occupy residues 535–553 (ALEE…EEFK), 563–576 (SAKH…VERR), 583–618 (RDAE…EKAA), and 625–637 (KQEK…GFDD). Residues 535 to 637 (ALEEEKSGVK…KDGEFKGFDD (103 aa)) form a disordered region.

This sequence belongs to the DEAD box helicase family. DDX55/SPB4 subfamily. As to quaternary structure, component of pre-60S ribosomal complexes.

It is found in the nucleus. The protein resides in the nucleolus. It catalyses the reaction ATP + H2O = ADP + phosphate + H(+). ATP-binding RNA helicase involved in the biogenesis of 60S ribosomal subunits. Binds 90S pre-ribosomal particles and dissociates from pre-60S ribosomal particles after processing of 27SB pre-rRNA. Required for the normal formation of 18S rRNA through the processing of pre-rRNAs at sites A0, A1 and A2, and the normal formation of 25S and 5.8S rRNAs through the processing of pre-rRNAs at sites C1 and C2. The protein is ATP-dependent rRNA helicase SPB4 of Gibberella zeae (strain ATCC MYA-4620 / CBS 123657 / FGSC 9075 / NRRL 31084 / PH-1) (Wheat head blight fungus).